A 144-amino-acid chain; its full sequence is NADH-ubiquinone oxidoreductase chain 6 (144 aa).

5 helical membrane-spanning segments follow: residues 1-21, 25-45, 46-66, 79-99, and 108-128; these read MVKVFFVLAVLSSIISYINID, SSFFLIFSLLFSMPVISMSMH, IWFSYFICLLFLSGIFVILVY, YMAVFLLLLSMLYFSPTVLTY, and FYYSIYWFIFCFILVCLLFFM.

Belongs to the complex I subunit 6 family.

It localises to the mitochondrion membrane. The enzyme catalyses a ubiquinone + NADH + 5 H(+)(in) = a ubiquinol + NAD(+) + 4 H(+)(out). In terms of biological role, core subunit of the mitochondrial membrane respiratory chain NADH dehydrogenase (Complex I) that is believed to belong to the minimal assembly required for catalysis. Complex I functions in the transfer of electrons from NADH to the respiratory chain. The immediate electron acceptor for the enzyme is believed to be ubiquinone. This Caenorhabditis elegans protein is NADH-ubiquinone oxidoreductase chain 6.